The primary structure comprises 206 residues: 2,3-bisphosphoglycerate-dependent phosphoglycerate mutase (206 aa).

Residues 9–16 (RHGQSEWN), 22–23 (TG), Arg61, 88–91 (ERNY), Lys99, 115–116 (RR), and 159–160 (GN) contribute to the substrate site. The active-site Tele-phosphohistidine intermediate is His10. The active-site Proton donor/acceptor is Glu88.

This sequence belongs to the phosphoglycerate mutase family. BPG-dependent PGAM subfamily. As to quaternary structure, homodimer.

It carries out the reaction (2R)-2-phosphoglycerate = (2R)-3-phosphoglycerate. Its pathway is carbohydrate degradation; glycolysis; pyruvate from D-glyceraldehyde 3-phosphate: step 3/5. Functionally, catalyzes the interconversion of 2-phosphoglycerate and 3-phosphoglycerate. The protein is 2,3-bisphosphoglycerate-dependent phosphoglycerate mutase of Bartonella tribocorum (strain CIP 105476 / IBS 506).